Consider the following 336-residue polypeptide: Fructose-1,6-bisphosphatase class 1 (336 aa).

Mg(2+) is bound by residues Glu92, Asp115, Leu117, and Asp118. Substrate is bound by residues 118-121 (DGSS), Asn211, Tyr244, 262-264 (YLY), and Lys274. Glu280 provides a ligand contact to Mg(2+).

The protein belongs to the FBPase class 1 family. Homotetramer. Requires Mg(2+) as cofactor.

Its subcellular location is the cytoplasm. It catalyses the reaction beta-D-fructose 1,6-bisphosphate + H2O = beta-D-fructose 6-phosphate + phosphate. Its pathway is carbohydrate biosynthesis; gluconeogenesis. The chain is Fructose-1,6-bisphosphatase class 1 from Vibrio cholerae serotype O1 (strain ATCC 39315 / El Tor Inaba N16961).